A 351-amino-acid chain; its full sequence is Probable sugar phosphate/phosphate translocator At5g11230 (351 aa).

10 helical membrane-spanning segments follow: residues 15–35, 49–69, 89–109, 113–133, 141–161, 165–185, 205–225, 236–256, 263–283, and 286–306; these read IVLS…VIVY, FPIS…FLII, VVPI…AYIY, SFIQ…GVLF, DTMM…YGEA, VWGV…LVLI, VAPC…FPVL, AIFG…FLLV, TMNV…WSVI, and TVTP…AYYN. The EamA domain occupies 38–156; the sequence is YILDKKMYNW…LSISFGVAIA (119 aa). A disordered region spans residues 321-351; sequence KKIQQADEESGRLLEEREGDVEGKKNDQSGN.

Belongs to the TPT transporter family. TPT (TC 2.A.7.9) subfamily.

It is found in the membrane. The sequence is that of Probable sugar phosphate/phosphate translocator At5g11230 from Arabidopsis thaliana (Mouse-ear cress).